Consider the following 2293-residue polypeptide: Protein Ycf2 A (2293 aa).

1647–1654 (GSIGTGRS) is a binding site for ATP.

This sequence belongs to the Ycf2 family.

The protein localises to the plastid. The protein resides in the chloroplast stroma. Its function is as follows. Probable ATPase of unknown function. Its presence in a non-photosynthetic plant (Epifagus virginiana) and experiments in tobacco indicate that it has an essential function which is probably not related to photosynthesis. The protein is Protein Ycf2 A of Crucihimalaya wallichii (Rock-cress).